A 729-amino-acid chain; its full sequence is Phosphoribosylformylglycinamidine synthase subunit PurL (729 aa).

His-54 is a catalytic residue. ATP-binding residues include Tyr-57 and Lys-96. Glu-98 provides a ligand contact to Mg(2+). Residues 99–102 (SHNH) and Arg-121 contribute to the substrate site. His-100 (proton acceptor) is an active-site residue. Residue Asp-122 coordinates Mg(2+). Residue Gln-245 coordinates substrate. Asp-273 contacts Mg(2+). 317 to 319 (ETQ) contacts substrate. Residues Asp-495 and Gly-532 each contribute to the ATP site. Asn-533 is a binding site for Mg(2+). Ser-535 contacts substrate.

It belongs to the FGAMS family. As to quaternary structure, monomer. Part of the FGAM synthase complex composed of 1 PurL, 1 PurQ and 2 PurS subunits.

The protein localises to the cytoplasm. It catalyses the reaction N(2)-formyl-N(1)-(5-phospho-beta-D-ribosyl)glycinamide + L-glutamine + ATP + H2O = 2-formamido-N(1)-(5-O-phospho-beta-D-ribosyl)acetamidine + L-glutamate + ADP + phosphate + H(+). The protein operates within purine metabolism; IMP biosynthesis via de novo pathway; 5-amino-1-(5-phospho-D-ribosyl)imidazole from N(2)-formyl-N(1)-(5-phospho-D-ribosyl)glycinamide: step 1/2. Its function is as follows. Part of the phosphoribosylformylglycinamidine synthase complex involved in the purines biosynthetic pathway. Catalyzes the ATP-dependent conversion of formylglycinamide ribonucleotide (FGAR) and glutamine to yield formylglycinamidine ribonucleotide (FGAM) and glutamate. The FGAM synthase complex is composed of three subunits. PurQ produces an ammonia molecule by converting glutamine to glutamate. PurL transfers the ammonia molecule to FGAR to form FGAM in an ATP-dependent manner. PurS interacts with PurQ and PurL and is thought to assist in the transfer of the ammonia molecule from PurQ to PurL. In Staphylococcus aureus (strain Mu3 / ATCC 700698), this protein is Phosphoribosylformylglycinamidine synthase subunit PurL.